The following is a 417-amino-acid chain: MIDSILFDLIEREAKRERENIELIASENFVSLGVRQAVGSILTNKYAEGYPSKRYYGGCFVVDDIENLAISRAKELFGASYANVQPHSGSQANMAAIMALIKPGDKILGMELSHGGHLTHGSKVSFSGMLFDAYSYGVSRDSEIIDYDDVRRIARECRPNLIIAGASSYSREIDFKKFREIADEVSAYLLCDIAHTAGLVVTGFHNSPIDVAHLTTSTTHKTLRGPRGGLILAGKESSMIVNFNNKERTLENAVNSCVFPGTQGGPLMHVIAGKAVAFGEALMDEFKDYISSVIENTKAMAEYFVSEGFRIVSGGTDNHLFLVDLGILGITGADAEKVLESVNIILNKNIIPFDSKNPSVASGIRIGGAAITSRGLNRDDSIEVARFIIRALKTKSDYELKKIKCEVVEFISSFNMP.

(6S)-5,6,7,8-tetrahydrofolate contacts are provided by residues leucine 112 and 116-118 (GHL). Lysine 221 is modified (N6-(pyridoxal phosphate)lysine). (6S)-5,6,7,8-tetrahydrofolate is bound at residue glutamate 247.

The protein belongs to the SHMT family. In terms of assembly, homodimer. Requires pyridoxal 5'-phosphate as cofactor.

It is found in the cytoplasm. It carries out the reaction (6R)-5,10-methylene-5,6,7,8-tetrahydrofolate + glycine + H2O = (6S)-5,6,7,8-tetrahydrofolate + L-serine. It functions in the pathway one-carbon metabolism; tetrahydrofolate interconversion. It participates in amino-acid biosynthesis; glycine biosynthesis; glycine from L-serine: step 1/1. Catalyzes the reversible interconversion of serine and glycine with tetrahydrofolate (THF) serving as the one-carbon carrier. This reaction serves as the major source of one-carbon groups required for the biosynthesis of purines, thymidylate, methionine, and other important biomolecules. Also exhibits THF-independent aldolase activity toward beta-hydroxyamino acids, producing glycine and aldehydes, via a retro-aldol mechanism. The chain is Serine hydroxymethyltransferase from Borrelia turicatae (strain 91E135).